The sequence spans 192 residues: MSEYLLLLVGTVLVNNFVLVKFLGLCPFMGVSSKLESAIGMSMATTFVLTLASILSYLVNQYLLLPFDLGYLRTMSFILVIAVVVQFTEMLVQKTSASLHRALGIYLPLITTNCAVLGVALLNINEDHNFFESAIFGFGAAVGFSLVLILFSAMRERLAAADVPAPFKGGAIAMVTAGLMSLAFMGFTGLVK.

The next 6 helical transmembrane spans lie at 5-25, 39-59, 65-85, 102-122, 134-154, and 171-191; these read LLLL…FLGL, IGMS…SYLV, LPFD…AVVV, ALGI…VALL, AIFG…FSAM, and AIAM…TGLV.

It belongs to the NqrDE/RnfAE family. In terms of assembly, the complex is composed of six subunits: RnfA, RnfB, RnfC, RnfD, RnfE and RnfG.

It localises to the cell inner membrane. Part of a membrane-bound complex that couples electron transfer with translocation of ions across the membrane. The polypeptide is Ion-translocating oxidoreductase complex subunit A (Shewanella piezotolerans (strain WP3 / JCM 13877)).